The chain runs to 197 residues: Xanthine phosphoribosyltransferase (197 aa).

Xanthine is bound by residues Leu20 and Asn27. A 5-phospho-alpha-D-ribose 1-diphosphate-binding site is contributed by 128 to 132 (ANGQA). Lys156 is a binding site for xanthine.

The protein belongs to the purine/pyrimidine phosphoribosyltransferase family. Xpt subfamily. In terms of assembly, homodimer.

The protein localises to the cytoplasm. It catalyses the reaction XMP + diphosphate = xanthine + 5-phospho-alpha-D-ribose 1-diphosphate. The protein operates within purine metabolism; XMP biosynthesis via salvage pathway; XMP from xanthine: step 1/1. Converts the preformed base xanthine, a product of nucleic acid breakdown, to xanthosine 5'-monophosphate (XMP), so it can be reused for RNA or DNA synthesis. In Bacillus cereus (strain ATCC 10987 / NRS 248), this protein is Xanthine phosphoribosyltransferase.